A 196-amino-acid chain; its full sequence is Ribonuclease HII (196 aa).

Positions Lys9–Glu196 constitute an RNase H type-2 domain. A divalent metal cation is bound by residues Asp15, Glu16, and Asp107.

The protein belongs to the RNase HII family. Requires Mn(2+) as cofactor. The cofactor is Mg(2+).

The protein localises to the cytoplasm. It carries out the reaction Endonucleolytic cleavage to 5'-phosphomonoester.. Its function is as follows. Endonuclease that specifically degrades the RNA of RNA-DNA hybrids. This chain is Ribonuclease HII, found in Aeromonas salmonicida (strain A449).